Here is a 325-residue protein sequence, read N- to C-terminus: Germination protease (325 aa).

The propeptide occupies 1–7 (MYNVRTD).

This sequence belongs to the peptidase A25 family. Homotetramer. Post-translationally, autoproteolytically processed. The inactive tetrameric zymogen termed p46 autoprocesses to a smaller form termed p41, which is active only during spore germination.

The enzyme catalyses Endopeptidase action with P4 Glu or Asp, P1 preferably Glu &gt; Asp, P1' hydrophobic and P2' Ala.. In terms of biological role, initiates the rapid degradation of small, acid-soluble proteins during spore germination. This is Germination protease from Clostridium perfringens (strain ATCC 13124 / DSM 756 / JCM 1290 / NCIMB 6125 / NCTC 8237 / Type A).